The following is a 432-amino-acid chain: Gamma-glutamyl phosphate reductase (432 aa).

This sequence belongs to the gamma-glutamyl phosphate reductase family.

The protein localises to the cytoplasm. It carries out the reaction L-glutamate 5-semialdehyde + phosphate + NADP(+) = L-glutamyl 5-phosphate + NADPH + H(+). It participates in amino-acid biosynthesis; L-proline biosynthesis; L-glutamate 5-semialdehyde from L-glutamate: step 2/2. Its function is as follows. Catalyzes the NADPH-dependent reduction of L-glutamate 5-phosphate into L-glutamate 5-semialdehyde and phosphate. The product spontaneously undergoes cyclization to form 1-pyrroline-5-carboxylate. This chain is Gamma-glutamyl phosphate reductase, found in Methylobacterium radiotolerans (strain ATCC 27329 / DSM 1819 / JCM 2831 / NBRC 15690 / NCIMB 10815 / 0-1).